We begin with the raw amino-acid sequence, 258 residues long: Tryptophan synthase alpha chain (258 aa).

Residues glutamate 47 and aspartate 58 each act as proton acceptor in the active site.

Belongs to the TrpA family. Tetramer of two alpha and two beta chains.

The enzyme catalyses (1S,2R)-1-C-(indol-3-yl)glycerol 3-phosphate + L-serine = D-glyceraldehyde 3-phosphate + L-tryptophan + H2O. It participates in amino-acid biosynthesis; L-tryptophan biosynthesis; L-tryptophan from chorismate: step 5/5. Functionally, the alpha subunit is responsible for the aldol cleavage of indoleglycerol phosphate to indole and glyceraldehyde 3-phosphate. This Bacillus thuringiensis (strain Al Hakam) protein is Tryptophan synthase alpha chain.